A 72-amino-acid polypeptide reads, in one-letter code: Exodeoxyribonuclease 7 small subunit (72 aa).

Belongs to the XseB family. Heterooligomer composed of large and small subunits.

The protein resides in the cytoplasm. The catalysed reaction is Exonucleolytic cleavage in either 5'- to 3'- or 3'- to 5'-direction to yield nucleoside 5'-phosphates.. Its function is as follows. Bidirectionally degrades single-stranded DNA into large acid-insoluble oligonucleotides, which are then degraded further into small acid-soluble oligonucleotides. The chain is Exodeoxyribonuclease 7 small subunit from Chlamydia trachomatis serovar L2 (strain ATCC VR-902B / DSM 19102 / 434/Bu).